A 132-amino-acid polypeptide reads, in one-letter code: Small ribosomal subunit protein uS8 (132 aa).

This sequence belongs to the universal ribosomal protein uS8 family. In terms of assembly, part of the 30S ribosomal subunit. Contacts proteins S5 and S12.

In terms of biological role, one of the primary rRNA binding proteins, it binds directly to 16S rRNA central domain where it helps coordinate assembly of the platform of the 30S subunit. In Rubrobacter xylanophilus (strain DSM 9941 / JCM 11954 / NBRC 16129 / PRD-1), this protein is Small ribosomal subunit protein uS8.